We begin with the raw amino-acid sequence, 521 residues long: Citrinin biosynthesis cluster MFS transporter ctnC (521 aa).

The interval 1–29 is disordered; sequence MKEEIDAPVSTDASGTDLENARDQPSGEK. The next 8 membrane-spanning stretches (helical) occupy residues 58-78, 95-115, 124-144, 155-175, 182-202, 237-257, 313-333, and 349-369; these read SLIT…SSVF, VMTL…LVWG, LKPL…VAVA, FFLG…LADF, AIAI…GPIM, WTAW…FLTL, ILVC…LFFV, and GIAA…CLLV. A glycan (N-linked (GlcNAc...) asparagine) is linked at N383. The next 4 membrane-spanning stretches (helical) occupy residues 392 to 412, 417 to 437, 465 to 485, and 489 to 509; these read LPPM…FGWT, ISWA…LMIW, AVSA…GVDW, and LLGF…FYGA.

Belongs to the major facilitator superfamily. CAR1 family.

It is found in the membrane. Its function is as follows. MFS transporter; part of the gene cluster that mediates the biosynthesis the mycotoxin citrinin, a hepato-nephrotoxic compound to humans due to inhibition of respiration complex III. In Monascus purpureus (Red mold), this protein is Citrinin biosynthesis cluster MFS transporter ctnC (ctnC).